The primary structure comprises 310 residues: tRNA pseudouridine synthase B (310 aa).

Catalysis depends on Asp49, which acts as the Nucleophile.

Belongs to the pseudouridine synthase TruB family. Type 1 subfamily.

It carries out the reaction uridine(55) in tRNA = pseudouridine(55) in tRNA. Its function is as follows. Responsible for synthesis of pseudouridine from uracil-55 in the psi GC loop of transfer RNAs. This chain is tRNA pseudouridine synthase B, found in Idiomarina loihiensis (strain ATCC BAA-735 / DSM 15497 / L2-TR).